The following is a 280-amino-acid chain: Urease accessory protein UreD 3 (280 aa).

The protein belongs to the UreD family. As to quaternary structure, ureD, UreF and UreG form a complex that acts as a GTP-hydrolysis-dependent molecular chaperone, activating the urease apoprotein by helping to assemble the nickel containing metallocenter of UreC. The UreE protein probably delivers the nickel.

Its subcellular location is the cytoplasm. Its function is as follows. Required for maturation of urease via the functional incorporation of the urease nickel metallocenter. In Bradyrhizobium sp. (strain ORS 278), this protein is Urease accessory protein UreD 3.